The primary structure comprises 360 residues: DNA replication and repair protein RecF (360 aa).

Glycine 30 to threonine 37 lines the ATP pocket.

This sequence belongs to the RecF family.

It is found in the cytoplasm. In terms of biological role, the RecF protein is involved in DNA metabolism; it is required for DNA replication and normal SOS inducibility. RecF binds preferentially to single-stranded, linear DNA. It also seems to bind ATP. The sequence is that of DNA replication and repair protein RecF from Shewanella sediminis (strain HAW-EB3).